A 229-amino-acid polypeptide reads, in one-letter code: Golgi to ER traffic protein 1 (229 aa).

Residues 1 to 14 (MGILAALDLHPYTL) are Lumenal-facing. Residues 15 to 34 (VVSSFTVLLIQQLVGFIGKS) traverse the membrane as a helical segment. Topologically, residues 35–122 (TIQEFAWLFY…KINSLVGVVL (88 aa)) are cytoplasmic. The stretch at 60 to 117 (HTKKQEELHKLNREKRSISAQDEYAKWTKLNRQAEKLTAEVKSLSDDIAKDKSKINSL) forms a coiled coil. A helical membrane pass occupies residues 123–143 (LFLTTLPLWVFRLWFRKSVLF). Over 144–167 (YLPTGVFPYYVERVLAIPFFASGS) the chain is Lumenal. The chain crosses the membrane as a helical span at residues 168–184 (VGLTVWMFAVNNVISSV). Over 185-229 (LFLLTFPFKPSVPIPIRQTKVEEVVPESAESKESSPEVIDIADAN) the chain is Cytoplasmic. Positions 210-219 (PESAESKESS) are enriched in basic and acidic residues. A disordered region spans residues 210–229 (PESAESKESSPEVIDIADAN).

This sequence belongs to the WRB/GET1 family. As to quaternary structure, component of the Golgi to ER traffic (GET) complex, which is composed of GET1, GET2 and GET3. Within the complex, GET1 and GET2 form a heterotetramer which is stabilized by phosphatidylinositol binding and which binds to the GET3 homodimer.

Its subcellular location is the endoplasmic reticulum membrane. The protein localises to the golgi apparatus membrane. Its function is as follows. Required for the post-translational delivery of tail-anchored (TA) proteins to the endoplasmic reticulum. Together with GET2, acts as a membrane receptor for soluble GET3, which recognizes and selectively binds the transmembrane domain of TA proteins in the cytosol. The GET complex cooperates with the HDEL receptor ERD2 to mediate the ATP-dependent retrieval of resident ER proteins that contain a C-terminal H-D-E-L retention signal from the Golgi to the ER. This chain is Golgi to ER traffic protein 1, found in Scheffersomyces stipitis (strain ATCC 58785 / CBS 6054 / NBRC 10063 / NRRL Y-11545) (Yeast).